The primary structure comprises 294 residues: HTH-type transcriptional regulator TcbR (294 aa).

In terms of domain architecture, HTH lysR-type spans 1–58 (MEFRQLKYFIAVAEAGNMAAAAKRLHVSQPPITRQMQALEADLGVVLLERSHRGIELT). A DNA-binding region (H-T-H motif) is located at residues 18–37 (MAAAAKRLHVSQPPITRQMQ).

Belongs to the LysR transcriptional regulatory family.

Its function is as follows. Involved in regulation of chlorinated catechol metabolism. Transcriptional activator of the tcbCDEF chlorocatechol oxidative operon. May bind 2-chloromuconate as an inducer. The chain is HTH-type transcriptional regulator TcbR (tcbR) from Pseudomonas sp. (strain P51).